Consider the following 65-residue polypeptide: Large ribosomal subunit protein bL35 (65 aa).

Composition is skewed to basic residues over residues 1–11 (MPKIKTRRSAA) and 21–43 (KFKR…RKMR). The interval 1–65 (MPKIKTRRSA…KAVRRMLPNG (65 aa)) is disordered.

Belongs to the bacterial ribosomal protein bL35 family.

In Desulfovibrio desulfuricans (strain ATCC 27774 / DSM 6949 / MB), this protein is Large ribosomal subunit protein bL35.